A 682-amino-acid chain; its full sequence is Methionine--tRNA ligase (682 aa).

Positions 15-25 (PYANGAIHLGH) match the 'HIGH' region motif. The Zn(2+) site is built by C146, C149, C159, and C162. The 'KMSKS' region signature appears at 331–335 (KMSKS). ATP is bound at residue K334. Residues 580–682 (DFAKLDMRVA…SGVTAGMQVK (103 aa)) form the tRNA-binding domain.

The protein belongs to the class-I aminoacyl-tRNA synthetase family. MetG type 1 subfamily. Homodimer. Requires Zn(2+) as cofactor.

The protein localises to the cytoplasm. The enzyme catalyses tRNA(Met) + L-methionine + ATP = L-methionyl-tRNA(Met) + AMP + diphosphate. Functionally, is required not only for elongation of protein synthesis but also for the initiation of all mRNA translation through initiator tRNA(fMet) aminoacylation. The protein is Methionine--tRNA ligase of Haemophilus influenzae (strain PittEE).